The chain runs to 886 residues: Alanine--tRNA ligase (886 aa).

Zn(2+)-binding residues include H570, H574, C673, and H677.

The protein belongs to the class-II aminoacyl-tRNA synthetase family. Zn(2+) serves as cofactor.

The protein resides in the cytoplasm. The catalysed reaction is tRNA(Ala) + L-alanine + ATP = L-alanyl-tRNA(Ala) + AMP + diphosphate. Catalyzes the attachment of alanine to tRNA(Ala) in a two-step reaction: alanine is first activated by ATP to form Ala-AMP and then transferred to the acceptor end of tRNA(Ala). Also edits incorrectly charged Ser-tRNA(Ala) and Gly-tRNA(Ala) via its editing domain. This Chlorobium chlorochromatii (strain CaD3) protein is Alanine--tRNA ligase.